A 218-amino-acid chain; its full sequence is Large ribosomal subunit protein bL25 (218 aa).

Disordered stretches follow at residues 1–20 and 185–218; these read MKTHELKASPRTTRGNGPAR and PTAAALPEEGEEGEEGEEGGEGGEAEGAEAASEE. The segment covering 192–218 has biased composition (acidic residues); sequence EEGEEGEEGEEGGEGGEAEGAEAASEE.

This sequence belongs to the bacterial ribosomal protein bL25 family. CTC subfamily. As to quaternary structure, part of the 50S ribosomal subunit; part of the 5S rRNA/L5/L18/L25 subcomplex. Contacts the 5S rRNA. Binds to the 5S rRNA independently of L5 and L18.

In terms of biological role, this is one of the proteins that binds to the 5S RNA in the ribosome where it forms part of the central protuberance. The protein is Large ribosomal subunit protein bL25 of Desulfatibacillum aliphaticivorans.